The chain runs to 331 residues: UPF0194 membrane protein YbhG (331 aa).

Residues 1–19 form the signal peptide; it reads MKKPVVIGLVIAAIVAVIA. Positions 140–209 form a coiled coil; the sequence is RTISANDLEN…DLQDTTLIAP (70 aa).

This sequence belongs to the UPF0194 family.

It localises to the periplasm. This is UPF0194 membrane protein YbhG (ybhG) from Salmonella typhi.